Reading from the N-terminus, the 95-residue chain is Sec-independent protein translocase protein TatA (95 aa).

A helical membrane pass occupies residues 1-21 (MFGRLGAPEIILILVVIILLF). The segment covering 44–55 (AKAMKSEAKADD) has biased composition (basic and acidic residues). The interval 44 to 95 (AKAMKSEAKADDAAPADPPNPEQSAAQRTIQAAPGDVTSSRPVTEPTDTTKR) is disordered.

It belongs to the TatA/E family. In terms of assembly, the Tat system comprises two distinct complexes: a TatABC complex, containing multiple copies of TatA, TatB and TatC subunits, and a separate TatA complex, containing only TatA subunits. Substrates initially bind to the TatABC complex, which probably triggers association of the separate TatA complex to form the active translocon.

It is found in the cell membrane. Its function is as follows. Part of the twin-arginine translocation (Tat) system that transports large folded proteins containing a characteristic twin-arginine motif in their signal peptide across membranes. TatA could form the protein-conducting channel of the Tat system. This chain is Sec-independent protein translocase protein TatA, found in Streptomyces coelicolor (strain ATCC BAA-471 / A3(2) / M145).